The primary structure comprises 292 residues: UPF0749 protein Mb1856 (292 aa).

Positions 1 to 28 (MSENRPEPVAAETSAATTARHSQADAGA) are cleaved as a signal peptide. The tract at residues 1–30 (MSENRPEPVAAETSAATTARHSQADAGAHD) is disordered. Transmembrane regions (helical) follow at residues 68-88 (VFGT…VTQV), 152-172 (AALS…MITI), and 229-249 (VLSP…AAAM).

Belongs to the UPF0749 family.

It localises to the cell membrane. This Mycobacterium bovis (strain ATCC BAA-935 / AF2122/97) protein is UPF0749 protein Mb1856.